A 157-amino-acid polypeptide reads, in one-letter code: Protein FAM218A (157 aa).

A disordered region spans residues 104 to 127 (PAVTPPKLPGHSKSEGPPGKVRKR).

The protein is Protein FAM218A (FAM218A) of Homo sapiens (Human).